Here is a 372-residue protein sequence, read N- to C-terminus: UDP-N-acetylglucosamine--N-acetylmuramyl-(pentapeptide) pyrophosphoryl-undecaprenol N-acetylglucosamine transferase (372 aa).

Residues 16-18 (TGG), asparagine 128, arginine 164, serine 192, isoleucine 250, and glutamine 295 contribute to the UDP-N-acetyl-alpha-D-glucosamine site.

This sequence belongs to the glycosyltransferase 28 family. MurG subfamily.

It localises to the cell inner membrane. It catalyses the reaction di-trans,octa-cis-undecaprenyl diphospho-N-acetyl-alpha-D-muramoyl-L-alanyl-D-glutamyl-meso-2,6-diaminopimeloyl-D-alanyl-D-alanine + UDP-N-acetyl-alpha-D-glucosamine = di-trans,octa-cis-undecaprenyl diphospho-[N-acetyl-alpha-D-glucosaminyl-(1-&gt;4)]-N-acetyl-alpha-D-muramoyl-L-alanyl-D-glutamyl-meso-2,6-diaminopimeloyl-D-alanyl-D-alanine + UDP + H(+). Its pathway is cell wall biogenesis; peptidoglycan biosynthesis. Its function is as follows. Cell wall formation. Catalyzes the transfer of a GlcNAc subunit on undecaprenyl-pyrophosphoryl-MurNAc-pentapeptide (lipid intermediate I) to form undecaprenyl-pyrophosphoryl-MurNAc-(pentapeptide)GlcNAc (lipid intermediate II). The sequence is that of UDP-N-acetylglucosamine--N-acetylmuramyl-(pentapeptide) pyrophosphoryl-undecaprenol N-acetylglucosamine transferase from Paraburkholderia phytofirmans (strain DSM 17436 / LMG 22146 / PsJN) (Burkholderia phytofirmans).